We begin with the raw amino-acid sequence, 324 residues long: Beta-ketoacyl-[acyl-carrier-protein] synthase III (324 aa).

Residue Cys-112 is part of the active site. The interval 181-202 (TDGSRGQNLTSGNNPLRSPFSD) is disordered. Residues 184–196 (SRGQNLTSGNNPL) are compositionally biased toward polar residues. Residue His-249 is part of the active site. The tract at residues 250 to 254 (QANRR) is ACP-binding. Asn-279 is an active-site residue.

It belongs to the thiolase-like superfamily. FabH family. Homodimer.

The protein localises to the cytoplasm. The catalysed reaction is malonyl-[ACP] + acetyl-CoA + H(+) = 3-oxobutanoyl-[ACP] + CO2 + CoA. It functions in the pathway lipid metabolism; fatty acid biosynthesis. Its function is as follows. Catalyzes the condensation reaction of fatty acid synthesis by the addition to an acyl acceptor of two carbons from malonyl-ACP. Catalyzes the first condensation reaction which initiates fatty acid synthesis and may therefore play a role in governing the total rate of fatty acid production. Possesses both acetoacetyl-ACP synthase and acetyl transacylase activities. Its substrate specificity determines the biosynthesis of branched-chain and/or straight-chain of fatty acids. This chain is Beta-ketoacyl-[acyl-carrier-protein] synthase III, found in Streptococcus uberis (strain ATCC BAA-854 / 0140J).